Here is a 380-residue protein sequence, read N- to C-terminus: 4-hydroxy-3-methylbut-2-en-1-yl diphosphate synthase (flavodoxin) (380 aa).

Residues cysteine 273, cysteine 276, cysteine 308, and glutamate 315 each coordinate [4Fe-4S] cluster.

This sequence belongs to the IspG family. [4Fe-4S] cluster is required as a cofactor.

The enzyme catalyses (2E)-4-hydroxy-3-methylbut-2-enyl diphosphate + oxidized [flavodoxin] + H2O + 2 H(+) = 2-C-methyl-D-erythritol 2,4-cyclic diphosphate + reduced [flavodoxin]. The protein operates within isoprenoid biosynthesis; isopentenyl diphosphate biosynthesis via DXP pathway; isopentenyl diphosphate from 1-deoxy-D-xylulose 5-phosphate: step 5/6. Its function is as follows. Converts 2C-methyl-D-erythritol 2,4-cyclodiphosphate (ME-2,4cPP) into 1-hydroxy-2-methyl-2-(E)-butenyl 4-diphosphate. The polypeptide is 4-hydroxy-3-methylbut-2-en-1-yl diphosphate synthase (flavodoxin) (Leifsonia xyli subsp. xyli (strain CTCB07)).